Consider the following 156-residue polypeptide: ATP synthase subunit b (156 aa).

Residues 7-27 traverse the membrane as a helical segment; the sequence is IFFQMLVFFVLGWFTMKFVWP.

Belongs to the ATPase B chain family. As to quaternary structure, F-type ATPases have 2 components, F(1) - the catalytic core - and F(0) - the membrane proton channel. F(1) has five subunits: alpha(3), beta(3), gamma(1), delta(1), epsilon(1). F(0) has three main subunits: a(1), b(2) and c(10-14). The alpha and beta chains form an alternating ring which encloses part of the gamma chain. F(1) is attached to F(0) by a central stalk formed by the gamma and epsilon chains, while a peripheral stalk is formed by the delta and b chains.

It localises to the cell inner membrane. Its function is as follows. F(1)F(0) ATP synthase produces ATP from ADP in the presence of a proton or sodium gradient. F-type ATPases consist of two structural domains, F(1) containing the extramembraneous catalytic core and F(0) containing the membrane proton channel, linked together by a central stalk and a peripheral stalk. During catalysis, ATP synthesis in the catalytic domain of F(1) is coupled via a rotary mechanism of the central stalk subunits to proton translocation. Functionally, component of the F(0) channel, it forms part of the peripheral stalk, linking F(1) to F(0). This is ATP synthase subunit b from Bordetella pertussis (strain Tohama I / ATCC BAA-589 / NCTC 13251).